We begin with the raw amino-acid sequence, 585 residues long: Aspartate--tRNA(Asp/Asn) ligase (585 aa).

L-aspartate is bound at residue Glu175. The interval 199 to 202 is aspartate; it reads QLFK. L-aspartate is bound at residue Arg221. Residues 221 to 223 and Gln230 contribute to the ATP site; that span reads RDE. His448 provides a ligand contact to L-aspartate. Glu482 provides a ligand contact to ATP. Arg489 contacts L-aspartate. 534–537 lines the ATP pocket; it reads GLDR.

It belongs to the class-II aminoacyl-tRNA synthetase family. Type 1 subfamily. In terms of assembly, homodimer.

It localises to the cytoplasm. The enzyme catalyses tRNA(Asx) + L-aspartate + ATP = L-aspartyl-tRNA(Asx) + AMP + diphosphate. Functionally, aspartyl-tRNA synthetase with relaxed tRNA specificity since it is able to aspartylate not only its cognate tRNA(Asp) but also tRNA(Asn). Reaction proceeds in two steps: L-aspartate is first activated by ATP to form Asp-AMP and then transferred to the acceptor end of tRNA(Asp/Asn). The protein is Aspartate--tRNA(Asp/Asn) ligase of Natranaerobius thermophilus (strain ATCC BAA-1301 / DSM 18059 / JW/NM-WN-LF).